A 490-amino-acid chain; its full sequence is Arginine decarboxylase (490 aa).

An N6-(pyridoxal phosphate)lysine modification is found at K226.

The protein belongs to the Orn/Lys/Arg decarboxylase class-I family. Pyridoxal 5'-phosphate is required as a cofactor.

Its subcellular location is the cytoplasm. It carries out the reaction L-arginine + H(+) = agmatine + CO2. Its pathway is amine and polyamine biosynthesis; agmatine biosynthesis; agmatine from L-arginine: step 1/1. Functionally, catalyzes the formation of agmatine from arginine. The polypeptide is Arginine decarboxylase (speA) (Bacillus subtilis (strain 168)).